Reading from the N-terminus, the 1518-residue chain is Putative cellulose synthase 3 (1518 aa).

The interval 1 to 731 (MYGTWFTTGK…EEKLEKQSFV (731 aa)) is catalytic. Transmembrane regions (helical) follow at residues 24-44 (PVWV…SVRI), 71-91 (ITVF…VWRL), and 105-125 (LAVL…LSYF). Positions 144-237 (QWPSVDVFVP…FAVIFDCDHV (94 aa)) are catalytic subdomain A. Catalysis depends on residues Asp-186 and Asp-330. The segment at 314–374 (EAVMGIGGFA…GQRVRWARGM (61 aa)) is catalytic subdomain B. The next 5 helical transmembrane spans lie at 404-424 (FLFA…LFLG), 428-448 (IAAS…HSVI), 465-485 (IYET…LLQP), 514-534 (ILAG…VWQF), and 543-563 (FILN…SIAV). The PilZ domain occupies 569 to 668 (QTRNAPRVSV…ERQVVSMVFG (100 aa)). The tract at residues 732-1518 (LKPVPRSARH…IARDDLTGEL (787 aa)) is cyclic di-GMP binding domain. Positions 765-785 (APSPDQSGVTAETPFGDSNTG) are disordered. Over residues 768–785 (PDQSGVTAETPFGDSNTG) the composition is skewed to polar residues. The helical transmembrane segment at 1481–1501 (ALYLAGLAGAGLAALGVWAWL) threads the bilayer.

In the N-terminal section; belongs to the glycosyltransferase 2 family. The protein in the C-terminal section; belongs to the AcsB/BcsB family.

Its subcellular location is the cell inner membrane. The catalysed reaction is [(1-&gt;4)-beta-D-glucosyl](n) + UDP-alpha-D-glucose = [(1-&gt;4)-beta-D-glucosyl](n+1) + UDP + H(+). It participates in glycan metabolism; bacterial cellulose biosynthesis. This is Putative cellulose synthase 3 (bcsABII-B) from Komagataeibacter xylinus (Gluconacetobacter xylinus).